Reading from the N-terminus, the 341-residue chain is Large ribosomal subunit protein uL10 (341 aa).

The segment at glutamate 301–phenylalanine 341 is disordered.

It belongs to the universal ribosomal protein uL10 family. Part of the 50S ribosomal subunit. Forms part of the ribosomal stalk which helps the ribosome interact with GTP-bound translation factors. Forms a heptameric L10(L12)2(L12)2(L12)2 complex, where L10 forms an elongated spine to which the L12 dimers bind in a sequential fashion.

Forms part of the ribosomal stalk, playing a central role in the interaction of the ribosome with GTP-bound translation factors. This is Large ribosomal subunit protein uL10 from Aeropyrum pernix (strain ATCC 700893 / DSM 11879 / JCM 9820 / NBRC 100138 / K1).